Consider the following 96-residue polypeptide: UPF0235 protein MK0273 (96 aa).

Belongs to the UPF0235 family.

This chain is UPF0235 protein MK0273, found in Methanopyrus kandleri (strain AV19 / DSM 6324 / JCM 9639 / NBRC 100938).